The sequence spans 195 residues: Large ribosomal subunit protein uL18 (195 aa).

The protein belongs to the universal ribosomal protein uL18 family. Part of the 50S ribosomal subunit. Contacts the 5S and 23S rRNAs.

Its function is as follows. This is one of the proteins that bind and probably mediate the attachment of the 5S RNA into the large ribosomal subunit, where it forms part of the central protuberance. This Korarchaeum cryptofilum (strain OPF8) protein is Large ribosomal subunit protein uL18.